The following is a 39-amino-acid chain: Potassium channel toxin alpha-KTx 2.17 (39 aa).

Cystine bridges form between Cys-7-Cys-29, Cys-13-Cys-34, and Cys-17-Cys-36. Ile-39 carries the post-translational modification Isoleucine amide.

Belongs to the short scorpion toxin superfamily. Potassium channel inhibitor family. Alpha-KTx 02 subfamily. Expressed by the venom gland.

It localises to the secreted. In terms of biological role, blocks human voltage-gated potassium channels Kv1.1/KCNA1 (IC(50)=4.8 nM) and Kv1.2/KCNA2 (IC(50)=2.9 nM). The chain is Potassium channel toxin alpha-KTx 2.17 from Centruroides tecomanus (Scorpion).